We begin with the raw amino-acid sequence, 250 residues long: MDTLRVEVVTLFPEMFSAITEYGITSRAVKQGLLQVTCWNPRDYTTDRHHTVDDRPFGGGPGMVMKIKPLEDALASARQATGAAAKVIYLSPQGRKLTQQAVKGLAEQESLILIAGRYEGIDERFIEAHVDEEWSIGDYVLSGGELPAMVLIDAVTRLLPGALGHVDSAEEDSFTDGLLDCPHYTRPEVYADQRVPDVLLSGNHAHIRRWRMKQSLGRTFERRADLLESRSLSGEEKKLLEEYLRERDDS.

S-adenosyl-L-methionine is bound by residues Gly-116 and 136–141; that span reads IGDYVL.

It belongs to the RNA methyltransferase TrmD family. As to quaternary structure, homodimer.

It is found in the cytoplasm. The catalysed reaction is guanosine(37) in tRNA + S-adenosyl-L-methionine = N(1)-methylguanosine(37) in tRNA + S-adenosyl-L-homocysteine + H(+). Functionally, specifically methylates guanosine-37 in various tRNAs. In Pseudomonas entomophila (strain L48), this protein is tRNA (guanine-N(1)-)-methyltransferase.